The following is a 99-amino-acid chain: Nucleoid-associated protein SZO_16661 (99 aa).

It belongs to the YbaB/EbfC family. As to quaternary structure, homodimer.

The protein localises to the cytoplasm. It is found in the nucleoid. In terms of biological role, binds to DNA and alters its conformation. May be involved in regulation of gene expression, nucleoid organization and DNA protection. This Streptococcus equi subsp. zooepidemicus (strain H70) protein is Nucleoid-associated protein SZO_16661.